A 340-amino-acid chain; its full sequence is Aurora kinase A- and ninein-interacting protein (340 aa).

Residues 175-340 (QREAKRKGEG…DSEGNRVIRH (166 aa)) are interaction with AURKA. Residues 178 to 190 (AKRKGEGLRESKT) show a composition bias toward basic and acidic residues. The tract at residues 178–209 (AKRKGEGLRESKTDCPGMGSHIRPPGSKCHQP) is disordered. Residues 266–340 (RDSWSQLFTE…DSEGNRVIRH (75 aa)) form an interaction with RBBP8/CtIP region. S277 carries the phosphoserine modification. The tract at residues 293-317 (DVTNARNQGSGQFPDSPQAQGQDGP) is disordered. The segment covering 296–313 (NARNQGSGQFPDSPQAQG) has biased composition (polar residues).

It belongs to the AUNIP family. Interacts (via C-terminus) with AURKA (via C-terminus). Interacts (via N-terminus) with NIN; this interaction blocks NIN phosphorylation by both AURKA and GSK3B. Identified in a complex with NIN and AURKA. Interacts with RBBP8/CtIP.

The protein localises to the nucleus. It is found in the chromosome. Its subcellular location is the cytoplasm. It localises to the cytoskeleton. The protein resides in the microtubule organizing center. The protein localises to the centrosome. It is found in the spindle pole. In terms of biological role, DNA-binding protein that accumulates at DNA double-strand breaks (DSBs) following DNA damage and promotes DNA resection and homologous recombination. Serves as a sensor of DNA damage: binds DNA with a strong preference for DNA substrates that mimic structures generated at stalled replication forks, and anchors RBBP8/CtIP to DSB sites to promote DNA end resection and ensuing homologous recombination repair. Inhibits non-homologous end joining (NHEJ). Required for the dynamic movement of AURKA at the centrosomes and spindle apparatus during the cell cycle. The polypeptide is Aurora kinase A- and ninein-interacting protein (Mus musculus (Mouse)).